A 250-amino-acid polypeptide reads, in one-letter code: Proteasome subunit alpha type-2 (250 aa).

Residue K108 forms a Glycyl lysine isopeptide (Lys-Gly) (interchain with G-Cter in ubiquitin) linkage.

The protein belongs to the peptidase T1A family. In terms of assembly, the 26S proteasome consists of a 20S proteasome core and two 19S regulatory subunits. The 20S proteasome core is composed of 28 subunits that are arranged in four stacked rings, resulting in a barrel-shaped structure. The two end rings are each formed by seven alpha subunits, and the two central rings are each formed by seven beta subunits. The catalytic chamber with the active sites is on the inside of the barrel.

The protein resides in the cytoplasm. It is found in the nucleus. In terms of biological role, the proteasome degrades poly-ubiquitinated proteins in the cytoplasm and in the nucleus. It is essential for the regulated turnover of proteins and for the removal of misfolded proteins. The proteasome is a multicatalytic proteinase complex that is characterized by its ability to cleave peptides with Arg, Phe, Tyr, Leu, and Glu adjacent to the leaving group at neutral or slightly basic pH. It has an ATP-dependent proteolytic activity. This is Proteasome subunit alpha type-2 (PRE8) from Saccharomyces cerevisiae (strain ATCC 204508 / S288c) (Baker's yeast).